The primary structure comprises 721 residues: Polyribonucleotide nucleotidyltransferase (721 aa).

The Mg(2+) site is built by D495 and D501. The 60-residue stretch at 562-621 (PRLLSFRIDPELIGTVIGPGGRTIKGITERTNTKIDIEDGGIVTIASHDGAAAEEAQKII) folds into the KH domain. The 69-residue stretch at 631–699 (GEIFSGVVTR…SRGRINLTLR (69 aa)) folds into the S1 motif domain. A disordered region spans residues 701-721 (VGQNNGMSYPEPTPTPVAPLN). Positions 711 to 721 (EPTPTPVAPLN) are enriched in pro residues.

The protein belongs to the polyribonucleotide nucleotidyltransferase family. It depends on Mg(2+) as a cofactor.

The protein localises to the cytoplasm. It catalyses the reaction RNA(n+1) + phosphate = RNA(n) + a ribonucleoside 5'-diphosphate. Its function is as follows. Involved in mRNA degradation. Catalyzes the phosphorolysis of single-stranded polyribonucleotides processively in the 3'- to 5'-direction. The polypeptide is Polyribonucleotide nucleotidyltransferase (Prochlorococcus marinus (strain MIT 9215)).